The chain runs to 249 residues: Tetraspanin-7 (249 aa).

Residues 1-16 (MASRRMETKPVITCLK) are Cytoplasmic-facing. The chain crosses the membrane as a helical span at residues 17–40 (TLLIIYSFVFWITGVILLAVGVWG). The Extracellular segment spans residues 41-56 (KLTLGTYISLIAENST). N54 carries N-linked (GlcNAc...) asparagine glycosylation. The chain crosses the membrane as a helical span at residues 57–75 (NAPYVLIGTGTTIVVFGLF). Over 76–86 (GCFATCRGSPW) the chain is Cytoplasmic. A helical transmembrane segment spans residues 87 to 112 (MLKLYAMFLSLVFLAELVAGISGFVF). Residues 113–213 (RHEIKDTFLR…LVTSFMETNM (101 aa)) are Extracellular-facing. N-linked (GlcNAc...) asparagine glycosylation is found at N155, N158, N177, and N188. Residues 214–234 (GIIAGVAFGIAFSQLIGMLLA) traverse the membrane as a helical segment. The Cytoplasmic portion of the chain corresponds to 235–249 (CCLSRFITANQYEMV).

It belongs to the tetraspanin (TM4SF) family. (Microbial infection) Interacts with herpes simplex virus 1 (HHV-1) UL35. As to expression, not solely expressed in T-cells. Expressed in acute myelocytic leukemia cells of some patients.

Its subcellular location is the membrane. May be involved in cell proliferation and cell motility. The polypeptide is Tetraspanin-7 (TSPAN7) (Homo sapiens (Human)).